The primary structure comprises 339 residues: Heat-inducible transcription repressor HrcA (339 aa).

Belongs to the HrcA family.

Negative regulator of class I heat shock genes (grpE-dnaK-dnaJ and groELS operons). Prevents heat-shock induction of these operons. The chain is Heat-inducible transcription repressor HrcA from Clostridium perfringens (strain 13 / Type A).